Reading from the N-terminus, the 271-residue chain is Aquaporin-2 (271 aa).

At 1-11 (MWELRSIAFSR) the chain is on the cytoplasmic side. The helical transmembrane segment at 12-32 (AVLAEFLATLLFVFFGLGSAL) threads the bilayer. The Extracellular segment spans residues 33 to 40 (NWPQALPS). Residues 41 to 59 (VLQIAMAFGLAIGTLVQAL) traverse the membrane as a helical segment. At 60 to 64 (GHVSG) the chain is on the cytoplasmic side. The segment at residues 65–74 (AHINPAVTVA) is an intramembrane region (discontinuously helical). An NPA 1 motif is present at residues 68 to 70 (NPA). The Cytoplasmic portion of the chain corresponds to 75–85 (CLVGCHVSFLR). Residues 86 to 107 (AVFYVAAQLLGAVAGAALLHEI) form a helical membrane-spanning segment. Over 108–127 (TPPAIRGDLAVNALNNNSTA) the chain is Extracellular. Asn-123 and Asn-124 each carry an N-linked (GlcNAc...) asparagine glycan. Residues 128–148 (GQAVTVELFLTLQLVLCIFPS) traverse the membrane as a helical segment. The Cytoplasmic portion of the chain corresponds to 149-156 (TDKRRGKQ). Residues 157-176 (LGHPALSIGFSVALGHLLGI) traverse the membrane as a helical segment. Topologically, residues 177–180 (HYTG) are extracellular. The discontinuously helical intramembrane region spans 181–193 (CSMNPARSLAPAI). The short motif at 184 to 186 (NPA) is the NPA 2 element. The Extracellular portion of the chain corresponds to 194-201 (VTGKFDDH). The helical transmembrane segment at 202–222 (WVFWIGPLVGAIVASLLYNYV) threads the bilayer. Over 223 to 271 (LFPPAKSLSERLAVLKGLEPDTDWEEREVRRRQSVELHSPQSLPRGTKA) the chain is Cytoplasmic. The segment at 249–271 (REVRRRQSVELHSPQSLPRGTKA) is disordered. Ser-256 bears the Phosphoserine mark. Residues 261–271 (SPQSLPRGTKA) are compositionally biased toward polar residues.

This sequence belongs to the MIP/aquaporin (TC 1.A.8) family. Homotetramer. Ser-256 phosphorylation is necessary and sufficient for expression at the apical membrane. Endocytosis is not phosphorylation-dependent. Post-translationally, N-glycosylated. As to expression, expressed in renal collecting tubules.

Its subcellular location is the apical cell membrane. The protein localises to the basolateral cell membrane. It localises to the cell membrane. It is found in the cytoplasmic vesicle membrane. The protein resides in the golgi apparatus. Its subcellular location is the trans-Golgi network membrane. It catalyses the reaction H2O(in) = H2O(out). It carries out the reaction glycerol(in) = glycerol(out). Forms a water-specific channel that provides the plasma membranes of renal collecting duct with high permeability to water, thereby permitting water to move in the direction of an osmotic gradient. Could also be permeable to glycerol. The chain is Aquaporin-2 from Ovis aries (Sheep).